A 225-amino-acid polypeptide reads, in one-letter code: UPF0173 metal-dependent hydrolase Pcal_1074 (225 aa).

The protein belongs to the UPF0173 family.

In Pyrobaculum calidifontis (strain DSM 21063 / JCM 11548 / VA1), this protein is UPF0173 metal-dependent hydrolase Pcal_1074.